Reading from the N-terminus, the 309-residue chain is Beta-lactamase (309 aa).

An N-terminal signal peptide occupies residues 1–28 (MMILKNKRMLKIGICVGILGLSITSLEA). The active-site Acyl-ester intermediate is the Ser92. Residue Glu188 is the Proton acceptor of the active site. 254–256 (KSG) contacts substrate.

This sequence belongs to the class-A beta-lactamase family.

It catalyses the reaction a beta-lactam + H2O = a substituted beta-amino acid. In terms of biological role, this protein is a beta-lactamase with a substrate specificity for penicillins. The polypeptide is Beta-lactamase (bla) (Bacillus thuringiensis).